Reading from the N-terminus, the 139-residue chain is Thiosulfate:glutathione sulfurtransferase (139 aa).

At serine 26 the chain carries Phosphoserine. A Rhodanese domain is found at 37–138; it reads HDPNVVLVDV…WVSHGGDKLD (102 aa). Catalysis depends on cysteine 98, which acts as the Cysteine persulfide intermediate.

The protein localises to the mitochondrion. The enzyme catalyses thiosulfate + glutathione = S-sulfanylglutathione + sulfite + H(+). Its activity is regulated as follows. GSS(-) is a potent inhibitor of RDL1, since the presence of the sulfur dioxygenase strongly increases the RDL1 catalytic activity. Functionally, thiosulfate:glutathione sulfurtransferase (TST) required to produce S-sulfanylglutathione (GSS(-)), a central intermediate in hydrogen sulfide metabolism. Provides the link between the first step in H(2)S metabolism performed by the sulfide:quinone oxidoreductase (SQOR) which catalyzes the conversion of H(2)S to thiosulfate, and the sulfur dioxygenase (SDO) which uses GSS(-) as substrate. The thermodynamic coupling of the irreversible SDO and reversible TST reactions provides a model for the physiologically relevant reaction with thiosulfate as the sulfane donor. This chain is Thiosulfate:glutathione sulfurtransferase (RDL1), found in Saccharomyces cerevisiae (strain ATCC 204508 / S288c) (Baker's yeast).